The chain runs to 283 residues: Polyamine aminopropyltransferase (283 aa).

Positions 5 to 238 (TTWIDEYQKG…GIWSWTFASK (234 aa)) constitute a PABS domain. Glutamine 32 serves as a coordination point for S-methyl-5'-thioadenosine. The spermidine site is built by histidine 63 and aspartate 87. S-methyl-5'-thioadenosine-binding positions include glutamate 107 and 139-140 (DG). Aspartate 158 serves as the catalytic Proton acceptor. Residue 158-161 (DCSD) coordinates spermidine.

It belongs to the spermidine/spermine synthase family. Homodimer or homotetramer.

The protein resides in the cytoplasm. It catalyses the reaction S-adenosyl 3-(methylsulfanyl)propylamine + putrescine = S-methyl-5'-thioadenosine + spermidine + H(+). The protein operates within amine and polyamine biosynthesis; spermidine biosynthesis; spermidine from putrescine: step 1/1. In terms of biological role, catalyzes the irreversible transfer of a propylamine group from the amino donor S-adenosylmethioninamine (decarboxy-AdoMet) to putrescine (1,4-diaminobutane) to yield spermidine. In Prochlorococcus marinus (strain MIT 9515), this protein is Polyamine aminopropyltransferase.